A 465-amino-acid chain; its full sequence is MFPNSPDAFHQVRMMQSSIKASNFKLQSMEFRCHSNNVCEYQMEMLHHLLSVEAKTLPNLSLIEQQPEIKLGMRPLLLDFLMEVITILSLSRSTFPLTVNLIDRYCSTRIVKKQHYQLLGLTSLWISCKNLDSKFKVPTLNDLRKICVDSYYKELFVEMEKHILKSLEWVVNAPTFDAFIDLYSNLLISNSSNFEVANIIKKSSHKIKLFSNYIGELFQFYPNIYYDYTSSQIALIAILITVLTLKIPVDLISLLNFYNGLVKTEMFKSNVEQGAEDQFEEILSVDSFKSLFNKSFFKNLIKIIDNPPSSLKIKYFAENGKYSVLMKQLVTTASNTLKCILDPVPTTPKANSFVKHQQQQHHYHPRPPMSINTSMIPLTPVSNSTSPNRFSPDQIFSENESTPGIAFGTMTPDSQSTSPGEKRSYECIDELEIGTSTIAGYTLKNHDTLKRSKSANYGTLFYLQQ.

Residues 44 to 171 (EMLHHLLSVE…HILKSLEWVV (128 aa)) enclose the Cyclin N-terminal domain.

Belongs to the cyclin family. In terms of assembly, interacts with CDC28 and SLA1. Post-translationally, hyperphosphorylated. GRR1 preferentially mediates the degradation of hyperphosphorylated CLN3.

G1/S-specific cyclin essential for the control of the cell cycle at the G1/S (start) transition. CLN3 may be an upstream activator of the G1 cyclins which directly catalyze start. Required for budding and for cell cycle progression and morphogenesis in environment-induced hyphae. Degradation is mediated by GRR1. Through binding to CDC28, controls the phosphorylation of SLA1 which regulates cortical actin patch dynamics. The polypeptide is G1/S-specific cyclin CLN3 (CLN3) (Candida albicans (strain SC5314 / ATCC MYA-2876) (Yeast)).